A 375-amino-acid polypeptide reads, in one-letter code: Succinyl-diaminopimelate desuccinylase (375 aa).

H75 is a binding site for Zn(2+). D77 is a catalytic residue. A Zn(2+)-binding site is contributed by D106. E136 serves as the catalytic Proton acceptor. The Zn(2+) site is built by E137, E165, and H348.

The protein belongs to the peptidase M20A family. DapE subfamily. In terms of assembly, homodimer. Requires Zn(2+) as cofactor. It depends on Co(2+) as a cofactor.

It catalyses the reaction N-succinyl-(2S,6S)-2,6-diaminopimelate + H2O = (2S,6S)-2,6-diaminopimelate + succinate. It functions in the pathway amino-acid biosynthesis; L-lysine biosynthesis via DAP pathway; LL-2,6-diaminopimelate from (S)-tetrahydrodipicolinate (succinylase route): step 3/3. In terms of biological role, catalyzes the hydrolysis of N-succinyl-L,L-diaminopimelic acid (SDAP), forming succinate and LL-2,6-diaminopimelate (DAP), an intermediate involved in the bacterial biosynthesis of lysine and meso-diaminopimelic acid, an essential component of bacterial cell walls. The polypeptide is Succinyl-diaminopimelate desuccinylase (Novosphingobium aromaticivorans (strain ATCC 700278 / DSM 12444 / CCUG 56034 / CIP 105152 / NBRC 16084 / F199)).